The primary structure comprises 245 residues: 1-(5-phosphoribosyl)-5-[(5-phosphoribosylamino)methylideneamino] imidazole-4-carboxamide isomerase (245 aa).

The Proton acceptor role is filled by Asp7. Asp129 acts as the Proton donor in catalysis.

The protein belongs to the HisA/HisF family.

The protein resides in the cytoplasm. It carries out the reaction 1-(5-phospho-beta-D-ribosyl)-5-[(5-phospho-beta-D-ribosylamino)methylideneamino]imidazole-4-carboxamide = 5-[(5-phospho-1-deoxy-D-ribulos-1-ylimino)methylamino]-1-(5-phospho-beta-D-ribosyl)imidazole-4-carboxamide. It functions in the pathway amino-acid biosynthesis; L-histidine biosynthesis; L-histidine from 5-phospho-alpha-D-ribose 1-diphosphate: step 4/9. The chain is 1-(5-phosphoribosyl)-5-[(5-phosphoribosylamino)methylideneamino] imidazole-4-carboxamide isomerase from Escherichia coli (strain ATCC 8739 / DSM 1576 / NBRC 3972 / NCIMB 8545 / WDCM 00012 / Crooks).